Here is a 404-residue protein sequence, read N- to C-terminus: Cysteine desulfurase IscS (404 aa).

Pyridoxal 5'-phosphate is bound by residues 75–76, asparagine 155, glutamine 183, and 203–205; these read AT and SGH. Residue lysine 206 is modified to N6-(pyridoxal phosphate)lysine. Threonine 243 provides a ligand contact to pyridoxal 5'-phosphate. Residue cysteine 328 is the Cysteine persulfide intermediate of the active site. Cysteine 328 contacts [2Fe-2S] cluster.

It belongs to the class-V pyridoxal-phosphate-dependent aminotransferase family. NifS/IscS subfamily. Homodimer. Forms a heterotetramer with IscU, interacts with other sulfur acceptors. Pyridoxal 5'-phosphate is required as a cofactor.

The protein localises to the cytoplasm. The catalysed reaction is (sulfur carrier)-H + L-cysteine = (sulfur carrier)-SH + L-alanine. Its pathway is cofactor biosynthesis; iron-sulfur cluster biosynthesis. Master enzyme that delivers sulfur to a number of partners involved in Fe-S cluster assembly, tRNA modification or cofactor biosynthesis. Catalyzes the removal of elemental sulfur atoms from cysteine to produce alanine. Functions as a sulfur delivery protein for Fe-S cluster synthesis onto IscU, an Fe-S scaffold assembly protein, as well as other S acceptor proteins. The chain is Cysteine desulfurase IscS from Pectobacterium carotovorum subsp. carotovorum (strain PC1).